The following is a 362-amino-acid chain: Glutamate 5-kinase (362 aa).

Lys3 provides a ligand contact to ATP. Substrate contacts are provided by Ser43, Asp128, and Asn140. ATP contacts are provided by residues 160-161 (TD) and 202-208 (TGGMRTK). The region spanning 267–348 (AGAILVDAGA…RDIENVLGYS (82 aa)) is the PUA domain.

Belongs to the glutamate 5-kinase family.

It is found in the cytoplasm. It carries out the reaction L-glutamate + ATP = L-glutamyl 5-phosphate + ADP. Its pathway is amino-acid biosynthesis; L-proline biosynthesis; L-glutamate 5-semialdehyde from L-glutamate: step 1/2. In terms of biological role, catalyzes the transfer of a phosphate group to glutamate to form L-glutamate 5-phosphate. The sequence is that of Glutamate 5-kinase from Xanthomonas oryzae pv. oryzae (strain MAFF 311018).